The sequence spans 272 residues: Probable ribonuclease HI_0526 (272 aa).

The N-terminal stretch at 1 to 23 is a signal peptide; that stretch reads MKKLTSILSLIVLVILAIWQYFT. Catalysis depends on residues His-148, Glu-195, and His-199.

It belongs to the RNase T2 family.

The sequence is that of Probable ribonuclease HI_0526 from Haemophilus influenzae (strain ATCC 51907 / DSM 11121 / KW20 / Rd).